We begin with the raw amino-acid sequence, 61 residues long: Large ribosomal subunit protein bL32 (61 aa).

Residues 1 to 19 are compositionally biased toward basic residues; the sequence is MAHPKRRQSKTRTAKRRTH. Residues 1–20 form a disordered region; that stretch reads MAHPKRRQSKTRTAKRRTHD.

Belongs to the bacterial ribosomal protein bL32 family.

The chain is Large ribosomal subunit protein bL32 from Bacteroides fragilis (strain YCH46).